The chain runs to 233 residues: tRNA (guanine-N(7)-)-methyltransferase (233 aa).

4 residues coordinate S-adenosyl-L-methionine: Glu65, Glu90, Asp117, and Asp139. Asp139 is an active-site residue. Residues Lys143, Asp175, and 212 to 215 (TRYE) each bind substrate.

It belongs to the class I-like SAM-binding methyltransferase superfamily. TrmB family.

The catalysed reaction is guanosine(46) in tRNA + S-adenosyl-L-methionine = N(7)-methylguanosine(46) in tRNA + S-adenosyl-L-homocysteine. Its pathway is tRNA modification; N(7)-methylguanine-tRNA biosynthesis. In terms of biological role, catalyzes the formation of N(7)-methylguanine at position 46 (m7G46) in tRNA. In Roseobacter denitrificans (strain ATCC 33942 / OCh 114) (Erythrobacter sp. (strain OCh 114)), this protein is tRNA (guanine-N(7)-)-methyltransferase.